The following is a 686-amino-acid chain: MKPSWLQCRKVTSAGGLGGPLPGSSPARGAGAALRALVVPGPRGGLGGRGCRALSSGSGSEYKTHFAASVTDPERFWGKAAEQISWYKPWTKTLENKHSPSTRWFVEGMLNICYNAVDRHIENGKGDKIAIIYDSPVTNTKATFTYKEVLEQVSKLAGVLVKHGIKKGDTVVIYMPMIPQAMYTMLACARIGAIHSLIFGGFASKELSSRIDHVKPKVVVTASFGIEPGRRVEYVPLVEEALKIGQHKPDKILIYNRPNMEAVPLAPGRDLDWDEEMAKAQSHDCVPVLSEHPLYILYTSGTTGLPKGVIRPTGGYAVMLHWSMSSIYGLQPGEVWWAASDLGWVVGHSYICYGPLLHGNTTVLYEGKPVGTPDAGAYFRVLAEHGVAALFTAPTAIRAIRQQDPGAALGKQYSLTRFKTLFVAGERCDVETLEWSKNVFRVPVLDHWWQTETGSPITASCVGLGNSKTPPPGQAGKSVPGYNVMILDDNMQKLKARCLGNIVVKLPLPPGAFSGLWKNQEAFKHLYFEKFPGYYDTMDAGYMDEEGYLYVMSRVDDVINVAGHRISAGAIEESILSHGTVADCAVVGKEDPLKGHVPLALCVLRKDINATEEQVLEEIVKHVRQNIGPVAAFRNAVFVKQLPKTRSGKIPRSALSAIVNGKPYKITSTIEDPSIFGHVEEMLKQA.

The transit peptide at 1–29 directs the protein to the mitochondrion; it reads MKPSWLQCRKVTSAGGLGGPLPGSSPARG. 227–230 provides a ligand contact to CoA; it reads EPGR. Residues 425-427 and 446-451 contribute to the ATP site; these read GER and DHWWQT. N6-succinyllysine is present on Lys-518. N6-acetyllysine is present on Lys-524. Residues Asp-539, Arg-554, and Arg-565 each contribute to the ATP site. Arg-624 lines the CoA pocket.

This sequence belongs to the ATP-dependent AMP-binding enzyme family.

It localises to the mitochondrion matrix. The catalysed reaction is acetate + ATP + CoA = acetyl-CoA + AMP + diphosphate. It catalyses the reaction propanoate + ATP + CoA = propanoyl-CoA + AMP + diphosphate. The enzyme catalyses butanoate + ATP + CoA = butanoyl-CoA + AMP + diphosphate. Catalyzes the synthesis of acetyl-CoA from short-chain fatty acids. Propionate is the preferred substrate. Can utilize acetate and butyrate with a much lower affinity. This is Acyl-CoA synthetase short-chain family member 3, mitochondrial (ACSS3) from Homo sapiens (Human).